Consider the following 270-residue polypeptide: tRNA pseudouridine synthase A (270 aa).

Aspartate 51 serves as the catalytic Nucleophile. Tyrosine 109 contacts substrate.

Belongs to the tRNA pseudouridine synthase TruA family. As to quaternary structure, homodimer.

It catalyses the reaction uridine(38/39/40) in tRNA = pseudouridine(38/39/40) in tRNA. In terms of biological role, formation of pseudouridine at positions 38, 39 and 40 in the anticodon stem and loop of transfer RNAs. The sequence is that of tRNA pseudouridine synthase A from Burkholderia orbicola (strain MC0-3).